The sequence spans 480 residues: MAEANTPHIAIMPSPGMGHLIPFVELAKRLVQHDCFTVTMIISGETSPSKAQRSVLNSLPSSIASVFLPPADLSDVPSTARIETRAMLTMTRSNPALRELFGSLSTKKSLPAVLVVDMFGADAFDVAVDFHVSPYIFYASNANVLSFFLHLPKLDKTVSCEFRYLTEPLKIPGCVPITGKDFLDTVQDRNDDAYKLLLHNTKRYKEAKGILVNSFVDLESNAIKALQEPAPDKPTVYPIGPLVNTSSSNVNLEDKFGCLSWLDNQPFGSVLYISFGSGGTLTCEQFNELAIGLAESGKRFIWVIRSPSEIVSSSYFNPHSETDPFSFLPIGFLDRTKEKGLVVPSWAPQVQILAHPSTCGFLTHCGWNSTLESIVNGVPLIAWPLFAEQKMNTLLLVEDVGAALRIHAGEDGIVRREEVVRVVKALMEGEEGKAIGNKVKELKEGVVRVLGDDGLSSKSFGEVLLKWKTHQRDINQETSH.

UDP-alpha-D-glucose is bound by residues Ser277, 347–349 (APQ), 364–372 (HCGWNSTLE), and 386–389 (FAEQ).

The protein belongs to the UDP-glycosyltransferase family.

The sequence is that of UDP-glycosyltransferase 72B2 (UGT72B2) from Arabidopsis thaliana (Mouse-ear cress).